The sequence spans 523 residues: GMP synthase [glutamine-hydrolyzing] (523 aa).

In terms of domain architecture, Glutamine amidotransferase type-1 spans 8–205 (KILILDFGSQ…VVDICGCETN (198 aa)). Cysteine 85 (nucleophile) is an active-site residue. Active-site residues include histidine 179 and glutamate 181. In terms of domain architecture, GMPS ATP-PPase spans 206 to 398 (WTAENIIEDA…LGLPAEMLNR (193 aa)). 233–239 (SGGVDSS) is an ATP binding site.

Homodimer.

The enzyme catalyses XMP + L-glutamine + ATP + H2O = GMP + L-glutamate + AMP + diphosphate + 2 H(+). It functions in the pathway purine metabolism; GMP biosynthesis; GMP from XMP (L-Gln route): step 1/1. Functionally, catalyzes the synthesis of GMP from XMP. This chain is GMP synthase [glutamine-hydrolyzing], found in Histophilus somni (strain 129Pt) (Haemophilus somnus).